The primary structure comprises 1768 residues: Callose synthase 11 (1768 aa).

The Cytoplasmic segment spans residues 1 to 308; sequence MRRQRPSVAT…WNVYRSFDRL (308 aa). The chain crosses the membrane as a helical span at residues 309 to 329; it reads WILLLLYLQAAIIVATSDVKF. The Extracellular portion of the chain corresponds to 330–335; the sequence is PWQDRD. Residues 336-356 traverse the membrane as a helical segment; that stretch reads VEVALLTVFISWAGLRLLQSV. The Cytoplasmic portion of the chain corresponds to 357 to 370; that stretch reads LDASTQYSLVSRET. The helical transmembrane segment at 371–391 threads the bilayer; it reads YWLFIRLTLKFVVAVAWTVLF. Residues 392 to 421 lie on the Extracellular side of the membrane; that stretch reads SVFYARIWSQKNKDGVWSRAANERVVTFLK. The helical transmembrane segment at 422 to 442 threads the bilayer; the sequence is VVFVYVIPELLALVLFIVPCI. Over 443-480 the chain is Cytoplasmic; sequence RNWVEELNLGVVYFLTWWFYSKTFVGRGMREGLVDNVK. A helical transmembrane segment spans residues 481–501; sequence YTLFWIIVLATKFIFSYFLQI. Residues 502–530 are Extracellular-facing; the sequence is RPLIAPTRALLNLKDATYNWHEFFGSTHR. The helical transmembrane segment at 531 to 551 threads the bilayer; it reads IAVGMLWLPVILVYLMDLQIW. Over 552-1341 the chain is Cytoplasmic; the sequence is YSIYSSLVGA…FFRMLSFFYT (790 aa). The chain crosses the membrane as a helical span at residues 1342–1362; the sequence is TVGYYFNTMLIVFTVYAFLWG. Over 1363 to 1386 the chain is Extracellular; that stretch reads RLYLALSGVEKIAKDRSSSNEALG. The helical transmembrane segment at 1387–1407 threads the bilayer; that stretch reads AILNQQFIIQLGLFTALPMIL. The Cytoplasmic portion of the chain corresponds to 1408–1413; sequence ENSLER. A helical membrane pass occupies residues 1414–1434; that stretch reads GFLPAVWDFITMQLQLASFFY. At 1435–1481 the chain is on the extracellular side; sequence TFSMGTRTHYFGRTILHGGAKYRATGRGFVVEHKKFAENYRLYARTH. The helical transmembrane segment at 1482-1502 threads the bilayer; the sequence is FIKAIELAIILLVYAAYSPLA. Over 1503-1508 the chain is Cytoplasmic; sequence KSSFVY. Residues 1509–1529 form a helical membrane-spanning segment; the sequence is ILMTISSWFLITSWIISPFLF. At 1530–1583 the chain is on the extracellular side; it reads NPSGFDWLKTVNDFDDFIAWLWSRGGLFTKADQSWFTWWNEEQEHLKTTGVWGK. The chain crosses the membrane as a helical span at residues 1584–1604; that stretch reads LLEIILDLRFFFFQYSIVYHL. Topologically, residues 1605 to 1612 are cytoplasmic; it reads RIAENRTS. Residues 1613 to 1633 form a helical membrane-spanning segment; sequence IGVYLISWGCIIGIVAIYITT. The Extracellular segment spans residues 1634-1649; it reads IYAQKRYSVKEHIKYR. The helical transmembrane segment at 1650-1670 threads the bilayer; that stretch reads FIQFLVILLTVLVVVMMLQFT. The Cytoplasmic portion of the chain corresponds to 1671–1673; the sequence is KLT. Residues 1674-1694 form a helical membrane-spanning segment; that stretch reads VVDLLISLLAFVPTGWGLISI. The Extracellular portion of the chain corresponds to 1695–1719; the sequence is AQVLKPFLLSTVVWDTVISVARFYD. The helical transmembrane segment at 1720-1740 threads the bilayer; that stretch reads LFFGLIVMAPVALLSWLPGFQ. Topologically, residues 1741 to 1768 are cytoplasmic; the sequence is NMQTRILFNEAFSRGLQISIILAGKKST.

The protein belongs to the glycosyltransferase 48 family. In terms of tissue distribution, ubiquitous.

It localises to the cell membrane. The enzyme catalyses [(1-&gt;3)-beta-D-glucosyl](n) + UDP-alpha-D-glucose = [(1-&gt;3)-beta-D-glucosyl](n+1) + UDP + H(+). Required the formation of the callose wall separating the tetraspores (interstitial wall), but not for the callose wall surrounding the pollen mother cells (peripheral wall). Functionally redudant to CALS12 (GSL5). During plant growth and development, callose is found as a transitory component of the cell plate in dividing cells, is a major component of pollen mother cell walls and pollen tubes, and is found as a structural component of plasmodesmatal canals. The protein is Callose synthase 11 (CALS11) of Arabidopsis thaliana (Mouse-ear cress).